A 537-amino-acid chain; its full sequence is 2-succinyl-5-enolpyruvyl-6-hydroxy-3-cyclohexene-1-carboxylate synthase (537 aa).

This sequence belongs to the TPP enzyme family. MenD subfamily. In terms of assembly, homodimer. Mg(2+) is required as a cofactor. The cofactor is Mn(2+). Requires thiamine diphosphate as cofactor.

It carries out the reaction isochorismate + 2-oxoglutarate + H(+) = 5-enolpyruvoyl-6-hydroxy-2-succinyl-cyclohex-3-ene-1-carboxylate + CO2. It participates in quinol/quinone metabolism; 1,4-dihydroxy-2-naphthoate biosynthesis; 1,4-dihydroxy-2-naphthoate from chorismate: step 2/7. It functions in the pathway quinol/quinone metabolism; menaquinone biosynthesis. In terms of biological role, catalyzes the thiamine diphosphate-dependent decarboxylation of 2-oxoglutarate and the subsequent addition of the resulting succinic semialdehyde-thiamine pyrophosphate anion to isochorismate to yield 2-succinyl-5-enolpyruvyl-6-hydroxy-3-cyclohexene-1-carboxylate (SEPHCHC). This is 2-succinyl-5-enolpyruvyl-6-hydroxy-3-cyclohexene-1-carboxylate synthase from Rhodococcus erythropolis (strain PR4 / NBRC 100887).